The chain runs to 630 residues: Pentatricopeptide repeat-containing protein At1g63130, mitochondrial (630 aa).

Residues 1 to 22 (MRRLFAISSTGNRFVHRSLLGK) constitute a mitochondrion transit peptide. PPR repeat units follow at residues 80–114 (SIVEFSKLLSAIAKMNKFDLVISLGEQMQNLGISH), 115–149 (NLYTYSILINCFCRRSQLSLALAVLAKMMKLGYEP), 150–184 (DIVTLNSLLNGFCHGNRISDAVSLVGQMVEMGYQP), 185–219 (DSFTFNTLIHGLFRHNRASEAVALVDRMVVKGCQP), 220–254 (DLVTYGIVVNGLCKRGDIDLALSLLKKMEQGKIEP), 255–289 (GVVIYNTIIDALCNYKNVNDALNLFTEMDNKGIRP), 290–324 (NVVTYNSLIRCLCNYGRWSDASRLLSDMIERKINP), 325–359 (NVVTFSALIDAFVKEGKLVEAEKLYDEMIKRSIDP), 360–394 (DIFTYSSLINGFCMHDRLDEAKHMFELMISKDCFP), 395–429 (NVVTYNTLIKGFCKAKRVDEGMELFREMSQRGLVG), 430–464 (NTVTYTTLIHGFFQARECDNAQIVFKQMVSDGVLP), 465–499 (DIMTYSILLDGLCNNGKVETALVVFEYLQRSKMEP), 500–534 (DIYTYNIMIEGMCKAGKVEDGWDLFCSLSLKGVKP), 535–569 (NVVTYTTMMSGFCRKGLKEEADALFREMKEEGPLP), and 570–604 (DSGTYNTLIRAHLRDGDKAASAELIREMRSCRFVG).

This sequence belongs to the PPR family. P subfamily.

It is found in the mitochondrion. This is Pentatricopeptide repeat-containing protein At1g63130, mitochondrial from Arabidopsis thaliana (Mouse-ear cress).